The sequence spans 670 residues: UvrABC system protein B (670 aa).

The region spanning 25–412 (EGLEAGLSHQ…AGRVIEQVVR (388 aa)) is the Helicase ATP-binding domain. 38–45 (GVTGSGKT) is a binding site for ATP. The short motif at 91–114 (YYDYYQPEAYVPSSDTYIEKDSSI) is the Beta-hairpin element. A Helicase C-terminal domain is found at 429 to 582 (QVDDLLSQIR…QIAFNEAHGI (154 aa)). Residues 631–666 (SKRIRQLEEKMYQLARDLEFEAAAQLRDEIQTLRER) form the UVR domain.

Belongs to the UvrB family. As to quaternary structure, forms a heterotetramer with UvrA during the search for lesions. Interacts with UvrC in an incision complex.

The protein localises to the cytoplasm. In terms of biological role, the UvrABC repair system catalyzes the recognition and processing of DNA lesions. A damage recognition complex composed of 2 UvrA and 2 UvrB subunits scans DNA for abnormalities. Upon binding of the UvrA(2)B(2) complex to a putative damaged site, the DNA wraps around one UvrB monomer. DNA wrap is dependent on ATP binding by UvrB and probably causes local melting of the DNA helix, facilitating insertion of UvrB beta-hairpin between the DNA strands. Then UvrB probes one DNA strand for the presence of a lesion. If a lesion is found the UvrA subunits dissociate and the UvrB-DNA preincision complex is formed. This complex is subsequently bound by UvrC and the second UvrB is released. If no lesion is found, the DNA wraps around the other UvrB subunit that will check the other stand for damage. This chain is UvrABC system protein B, found in Pseudomonas aeruginosa (strain ATCC 15692 / DSM 22644 / CIP 104116 / JCM 14847 / LMG 12228 / 1C / PRS 101 / PAO1).